A 143-amino-acid polypeptide reads, in one-letter code: MSAVPSVQTFGKKKSATAVAHVKAGKGLIKVNGSPITLVEPEILRFKVYEPLLLVGLDKFSNIDIRVRVTGGGHVSQVYAIRQAIAKGLVAYHQKYVDEQSKNELKKAFTSYDRTLLIADSRRPEPKKFGGKGARSRFQKSYR.

The residue at position 2 (Ser2) is an N-acetylserine. Lys30 participates in a covalent cross-link: Glycyl lysine isopeptide (Lys-Gly) (interchain with G-Cter in ubiquitin). Ser34 bears the Phosphoserine mark. Glycyl lysine isopeptide (Lys-Gly) (interchain with G-Cter in ubiquitin) cross-links involve residues Lys47 and Lys59. Ser61 bears the Phosphoserine mark. Residue Thr70 is modified to Phosphothreonine. Ser76 is subject to Phosphoserine. The segment at 123 to 143 (RPEPKKFGGKGARSRFQKSYR) is disordered. Residues 134–143 (ARSRFQKSYR) show a composition bias toward basic residues.

Belongs to the universal ribosomal protein uS9 family. As to quaternary structure, component of the small ribosomal subunit (SSU). Mature yeast ribosomes consist of a small (40S) and a large (60S) subunit. The 40S small subunit contains 1 molecule of ribosomal RNA (18S rRNA) and 33 different proteins (encoded by 57 genes). The large 60S subunit contains 3 rRNA molecules (25S, 5.8S and 5S rRNA) and 46 different proteins (encoded by 81 genes).

The protein localises to the cytoplasm. In terms of biological role, component of the ribosome, a large ribonucleoprotein complex responsible for the synthesis of proteins in the cell. The small ribosomal subunit (SSU) binds messenger RNAs (mRNAs) and translates the encoded message by selecting cognate aminoacyl-transfer RNA (tRNA) molecules. The large subunit (LSU) contains the ribosomal catalytic site termed the peptidyl transferase center (PTC), which catalyzes the formation of peptide bonds, thereby polymerizing the amino acids delivered by tRNAs into a polypeptide chain. The nascent polypeptides leave the ribosome through a tunnel in the LSU and interact with protein factors that function in enzymatic processing, targeting, and the membrane insertion of nascent chains at the exit of the ribosomal tunnel. The chain is Small ribosomal subunit protein uS9A from Saccharomyces cerevisiae (strain ATCC 204508 / S288c) (Baker's yeast).